A 200-amino-acid chain; its full sequence is Holliday junction branch migration complex subunit RuvA (200 aa).

Residues 1 to 64 (MLSYLSGTLI…EDALQLYGFI (64 aa)) form a domain I region. The interval 65-143 (TTEDREVFKL…KLDLKIDIKE (79 aa)) is domain II. The segment at 144-148 (TAFRS) is flexible linker. The tract at residues 149–200 (DKQQVRNDAYSALISLGFTKSIAEKAMRAAIAEVPDGSVDDLIRVALRHVQS) is domain III.

The protein belongs to the RuvA family. As to quaternary structure, homotetramer. Forms an RuvA(8)-RuvB(12)-Holliday junction (HJ) complex. HJ DNA is sandwiched between 2 RuvA tetramers; dsDNA enters through RuvA and exits via RuvB. An RuvB hexamer assembles on each DNA strand where it exits the tetramer. Each RuvB hexamer is contacted by two RuvA subunits (via domain III) on 2 adjacent RuvB subunits; this complex drives branch migration. In the full resolvosome a probable DNA-RuvA(4)-RuvB(12)-RuvC(2) complex forms which resolves the HJ.

It localises to the cytoplasm. Functionally, the RuvA-RuvB-RuvC complex processes Holliday junction (HJ) DNA during genetic recombination and DNA repair, while the RuvA-RuvB complex plays an important role in the rescue of blocked DNA replication forks via replication fork reversal (RFR). RuvA specifically binds to HJ cruciform DNA, conferring on it an open structure. The RuvB hexamer acts as an ATP-dependent pump, pulling dsDNA into and through the RuvAB complex. HJ branch migration allows RuvC to scan DNA until it finds its consensus sequence, where it cleaves and resolves the cruciform DNA. The sequence is that of Holliday junction branch migration complex subunit RuvA from Chloroherpeton thalassium (strain ATCC 35110 / GB-78).